Reading from the N-terminus, the 210-residue chain is MAIERYFIREAVREMLIDEFLEKELRRAGYGGLDIKKTPLGTKVIIFAANPGYVIGRGGRRIRELTRILEKQFGLENPQIEVEEIKNPYLNAKVQAVRLAQALERGIHFRRAAYAALRAIMNNGARGVEIRLSGKLTGERAKSIRFYQGYLAKVGNPAETLVSKGYAQALLKLGVIGVKVAIMPPGARLPDEIEIIEKPVEEEVVSNEAE.

The region spanning 17 to 86 (IDEFLEKELR…NPQIEVEEIK (70 aa)) is the KH type-2 domain.

This sequence belongs to the universal ribosomal protein uS3 family. As to quaternary structure, part of the 30S ribosomal subunit.

In terms of biological role, binds the lower part of the 30S subunit head. This Pyrococcus furiosus (strain ATCC 43587 / DSM 3638 / JCM 8422 / Vc1) protein is Small ribosomal subunit protein uS3.